The sequence spans 453 residues: MDAQRGHTTTILMFPWLGYGHLSAFLELAKSLSRRNFHIYFCSTSVNLDAIKPKLPSSSSSDSIQLVELCLPSSPDQLPPHLHTTNALPPHLMPTLHQAFSMAAQHFAAILHTLAPHLLIYDSFQPWAPQLASSLNIPAINFNTTGASVLTRMLHATHYPSSKFPISEFVLHDYWKAMYSAAGGAVTKKDHKIGETLANCLHASCSVILINSFRELEEKYMDYLSVLLNKKVVPVGPLVYEPNQDGEDEGYSSIKNWLDKKEPSSTVFVSFGSEYFPSKEEMEEIAHGLEASEVHFIWVVRFPQGDNTSAIEDALPKGFLERVGERGMVVKGWAPQAKILKHWSTGGFVSHCGWNSVMESMMFGVPIIGVPMHLDQPFNAGLAEEAGVGVEAKRDPDGKIQRDEVAKLIKEVVVEKTREDVRKKAREMSEILRSKGEEKMDEMVAAISLFLKI.

H21 (proton acceptor) is an active-site residue. D122 functions as the Charge relay in the catalytic mechanism. UDP-alpha-D-glucose is bound by residues S273, Q336, W354, N355, S356, E359, D375, and Q376.

It belongs to the UDP-glycosyltransferase family. As to expression, highly expressed in mature fruits.

The enzyme catalyses mogroside IIE + UDP-alpha-D-glucose = mogroside IIIX + UDP + H(+). The catalysed reaction is mogroside III + UDP-alpha-D-glucose = mogroside IV + UDP + H(+). It catalyses the reaction mogroside III + UDP-alpha-D-glucose = siamenoside I + UDP + H(+). It carries out the reaction mogroside IV + UDP-alpha-D-glucose = mogroside V + UDP + H(+). It functions in the pathway secondary metabolite biosynthesis; terpenoid biosynthesis. UDP-glycosyltransferase involved in the biosynthesis of cucurbitacin and mogroside tetracyclic triterpene natural products (e.g. siamenoside I and mogrosides IV, V and VI). Cucurbitacins have cytotoxic properties and exhibit deterrent taste as a defense barrier against herbivores. Mogrosides are nonsugar highly oxygenated compounds used as high-intensity zero-calorie sweeteners; they also possess pharmacological properties such as regulating immunity, lowering blood sugar and lipid levels, protecting the liver, and acting as antioxidants and antitumor agents. Catalyzes the branched glucosylations of mogroside II-E, mogroside III and mogroside IV. This Siraitia grosvenorii (Monk's fruit) protein is Mogroside IIIx synthase.